The sequence spans 352 residues: ATPase GET3 (352 aa).

26 to 33 (KGGVGKTT) provides a ligand contact to ATP. Residue D57 is part of the active site. Residues E243 and N270 each contribute to the ATP site. Zn(2+) is bound by residues C283 and C286.

Belongs to the arsA ATPase family. In terms of assembly, homodimer. Component of the Golgi to ER traffic (GET) complex, which is composed of GET1, GET2 and GET3. Within the complex, GET1 and GET2 form a heterotetramer which is stabilized by phosphatidylinositol binding and which binds to the GET3 homodimer. Interacts with the chloride channel protein GEF1.

It is found in the cytoplasm. The protein localises to the endoplasmic reticulum. It localises to the golgi apparatus. Its function is as follows. ATPase required for the post-translational delivery of tail-anchored (TA) proteins to the endoplasmic reticulum. Recognizes and selectively binds the transmembrane domain of TA proteins in the cytosol. This complex then targets to the endoplasmic reticulum by membrane-bound receptors GET1 and GET2, where the tail-anchored protein is released for insertion. This process is regulated by ATP binding and hydrolysis. ATP binding drives the homodimer towards the closed dimer state, facilitating recognition of newly synthesized TA membrane proteins. ATP hydrolysis is required for insertion. Subsequently, the homodimer reverts towards the open dimer state, lowering its affinity for the GET1-GET2 receptor, and returning it to the cytosol to initiate a new round of targeting. Cooperates with the HDEL receptor ERD2 to mediate the ATP-dependent retrieval of resident ER proteins that contain a C-terminal H-D-E-L retention signal from the Golgi to the ER. Involved in low-level resistance to the oxyanions arsenite and arsenate, and in heat tolerance. The chain is ATPase GET3 from Vanderwaltozyma polyspora (strain ATCC 22028 / DSM 70294 / BCRC 21397 / CBS 2163 / NBRC 10782 / NRRL Y-8283 / UCD 57-17) (Kluyveromyces polysporus).